Consider the following 599-residue polypeptide: Microtubule-associated protein 70-2 (599 aa).

The segment at 1-30 is disordered; it reads MADGGGGEEGSASALRGSARRRGAVQPAGL. Residues 43–349 are a coiled coil; that stretch reads DPVKVELNRL…ARSEAQLKEK (307 aa). The tract at residues 227–460 is required for targeting to microtubules; that stretch reads ILDRLHRQKV…HLLNRSTDAV (234 aa). Disordered regions lie at residues 357-453 and 557-599; these read LEDG…PHLL and AMRL…RNLQ. The span at 404–420 shows a compositional bias: low complexity; the sequence is RRSPSFNSRSSLSTSSS. The stretch at 533 to 570 forms a coiled coil; the sequence is LTKAMEVEAKKMRREVAAMEKEVAAMRLDKDQENKAKR. Over residues 557–568 the composition is skewed to basic and acidic residues; that stretch reads AMRLDKDQENKA.

The protein belongs to the MAP70 family.

It is found in the cytoplasm. The protein resides in the cytoskeleton. Functionally, plant-specific protein that interact with microtubules. The chain is Microtubule-associated protein 70-2 (MAP70.2) from Oryza sativa subsp. japonica (Rice).